A 486-amino-acid chain; its full sequence is Arginine/agmatine antiporter (486 aa).

Helical transmembrane passes span 12 to 32, 41 to 61, 85 to 105, 129 to 149, 161 to 181, 211 to 231, 242 to 262, 296 to 316, 341 to 361, 367 to 387, 418 to 438, and 461 to 481; these read LGAIALAGMVISSMIGGGIFS, AGAGAIILAWILTGIGMFFIA, GFGPYVGFTIGWGYWLCQIFG, NTIPAIIGGSILIWVFNFIVL, IGTICKLIPLLIFIIITAFFF, STMLVTLWAFIGIEGAVVMSA, ATILGFSGCLIVYVLLSLLPF, IGLLIAILSSWLSWTVIVAEI, VSLYITSALMQVAMLLVYFST, MLSITGVMVLPAYLASAAFLV, IWLIYAGGIKYLFMAIVLLAL, and EVTKITIIAFLALLAIFLFST.

Belongs to the amino acid-polyamine-organocation (APC) superfamily. Basic amino acid/polyamine antiporter (APA) (TC 2.A.3.2) family.

It localises to the cell inner membrane. In terms of biological role, catalyzes the exchange of L-arginine for agmatine. The arginine uptake by the bacterium in the macrophage may be a virulence factor against the host innate immune response. This chain is Arginine/agmatine antiporter (aaxC), found in Chlamydia felis (strain Fe/C-56) (Chlamydophila felis).